A 214-amino-acid polypeptide reads, in one-letter code: MNELTIAMPKGRIFEEAYQMLLKAGFHLPEEVEMSRKLMIEIPEEKIRFILSKPMDVPVYVEHGVADIGIAGKDVLLEQQREVHELLDLNISNCYIASAGLPNTDMNEIAPRIATKYPNIAMKYYKGIGEQVEIIELNGSIELAPMIGLADRIVDIVSTGRTLKENGLVEYEFISTVSSRLIANPVSYRMKGERIIDLVRRLKKCVNEQKSNHI.

The protein belongs to the ATP phosphoribosyltransferase family. Short subfamily. Heteromultimer composed of HisG and HisZ subunits.

The protein localises to the cytoplasm. The enzyme catalyses 1-(5-phospho-beta-D-ribosyl)-ATP + diphosphate = 5-phospho-alpha-D-ribose 1-diphosphate + ATP. The protein operates within amino-acid biosynthesis; L-histidine biosynthesis; L-histidine from 5-phospho-alpha-D-ribose 1-diphosphate: step 1/9. Catalyzes the condensation of ATP and 5-phosphoribose 1-diphosphate to form N'-(5'-phosphoribosyl)-ATP (PR-ATP). Has a crucial role in the pathway because the rate of histidine biosynthesis seems to be controlled primarily by regulation of HisG enzymatic activity. The sequence is that of ATP phosphoribosyltransferase from Lysinibacillus sphaericus (strain C3-41).